A 299-amino-acid polypeptide reads, in one-letter code: GTP cyclohydrolase FolE2 (299 aa).

This sequence belongs to the GTP cyclohydrolase IV family.

It catalyses the reaction GTP + H2O = 7,8-dihydroneopterin 3'-triphosphate + formate + H(+). Its pathway is cofactor biosynthesis; 7,8-dihydroneopterin triphosphate biosynthesis; 7,8-dihydroneopterin triphosphate from GTP: step 1/1. Its function is as follows. Converts GTP to 7,8-dihydroneopterin triphosphate. The sequence is that of GTP cyclohydrolase FolE2 from Citrobacter koseri (strain ATCC BAA-895 / CDC 4225-83 / SGSC4696).